The sequence spans 282 residues: Undecaprenyl-diphosphatase (282 aa).

A run of 8 helical transmembrane segments spans residues 2–22 (FDFIKSIIIGIVEGLTEFLPV), 47–67 (FTAVFDYAIQLGAIFAVIQLY), 90–110 (WIKVIVGVLPAMVFGLLLNNF), 115–135 (LLNPWVVSATLIIYGIAFIVI), 152–172 (ITFKMALFIGLFQVLSLVPGT), 190–210 (FVAAEFSFFLSIPVMFGVTIL), 225–245 (AQLFVMLIGFVVSWVVALFAI), and 259–279 (IFGWYRIVVGILFLILGIAGL).

This sequence belongs to the UppP family.

The protein resides in the cell membrane. It catalyses the reaction di-trans,octa-cis-undecaprenyl diphosphate + H2O = di-trans,octa-cis-undecaprenyl phosphate + phosphate + H(+). Catalyzes the dephosphorylation of undecaprenyl diphosphate (UPP). Confers resistance to bacitracin. The sequence is that of Undecaprenyl-diphosphatase from Leuconostoc citreum (strain KM20).